The following is a 440-amino-acid chain: Argininosuccinate lyase (440 aa).

The protein belongs to the lyase 1 family. Argininosuccinate lyase subfamily.

It localises to the cytoplasm. It catalyses the reaction 2-(N(omega)-L-arginino)succinate = fumarate + L-arginine. The protein operates within amino-acid biosynthesis; L-arginine biosynthesis; L-arginine from L-ornithine and carbamoyl phosphate: step 3/3. The protein is Argininosuccinate lyase of Clostridium botulinum (strain Loch Maree / Type A3).